The chain runs to 281 residues: NADPH-dependent 7-cyano-7-deazaguanine reductase (281 aa).

88 to 90 serves as a coordination point for substrate; it reads IES. 90–91 is a binding site for NADPH; that stretch reads SK. The active-site Thioimide intermediate is Cys189. Asp196 serves as the catalytic Proton donor. 228–229 provides a ligand contact to substrate; it reads HE. 257-258 is a binding site for NADPH; sequence RG.

It belongs to the GTP cyclohydrolase I family. QueF type 2 subfamily. In terms of assembly, homodimer.

The protein resides in the cytoplasm. The enzyme catalyses 7-aminomethyl-7-carbaguanine + 2 NADP(+) = 7-cyano-7-deazaguanine + 2 NADPH + 3 H(+). Its pathway is tRNA modification; tRNA-queuosine biosynthesis. Catalyzes the NADPH-dependent reduction of 7-cyano-7-deazaguanine (preQ0) to 7-aminomethyl-7-deazaguanine (preQ1). The chain is NADPH-dependent 7-cyano-7-deazaguanine reductase from Yersinia pestis bv. Antiqua (strain Antiqua).